A 201-amino-acid chain; its full sequence is Large ribosomal subunit protein uL4 (201 aa).

A disordered region spans residues 44 to 68; that stretch reads RAQKSRADVSGSGRKPWRQKGTGRA.

It belongs to the universal ribosomal protein uL4 family. In terms of assembly, part of the 50S ribosomal subunit.

Its function is as follows. One of the primary rRNA binding proteins, this protein initially binds near the 5'-end of the 23S rRNA. It is important during the early stages of 50S assembly. It makes multiple contacts with different domains of the 23S rRNA in the assembled 50S subunit and ribosome. Functionally, forms part of the polypeptide exit tunnel. The protein is Large ribosomal subunit protein uL4 of Buchnera aphidicola subsp. Schizaphis graminum (strain Sg).